The sequence spans 764 residues: Metabotropic glutamate receptor-like protein H (764 aa).

The signal sequence occupies residues 1 to 20 (MKNILKILILILICINKINC). Residues 21-393 (LDGDGKQFRM…EVEFSQSIQN (373 aa)) lie on the Extracellular side of the membrane. N-linked (GlcNAc...) asparagine glycosylation is found at N72, N260, N278, N344, and N379. A helical membrane pass occupies residues 394 to 414 (GFSITTGILIGITILMMIGII). Topologically, residues 415 to 427 (KYSKTPSMRSASP) are cytoplasmic. Residues 428 to 448 (IFLNFILAGGIIVYIGIIVWV) form a helical membrane-spanning segment. At 449 to 464 (GPMSTHSCNARLWLVT) the chain is on the extracellular side. A helical membrane pass occupies residues 465-485 (LGFSTLIGSLVVKNFRIWLIF). Residues 486-500 (DNPELKSIKITNYQL) are Cytoplasmic-facing. Residues 501–521 (FPWVGACLVINIILMAILTSV) form a helical membrane-spanning segment. Residues 522-552 (GDLKQIDAMNIDSLGKYEYMKVCKMNSSGAS) lie on the Extracellular side of the membrane. N-linked (GlcNAc...) asparagine glycosylation occurs at N547. The chain crosses the membrane as a helical span at residues 553–573 (TLYTILAYFAALLLVGVFVSW). Residues 574–587 (KIRIVDILEFNESG) are Cytoplasmic-facing. A helical transmembrane segment spans residues 588-608 (AIANTLYAISFCLFVIVPLMI). The Extracellular portion of the chain corresponds to 609–617 (SPQDMQSET). The helical transmembrane segment at 618-638 (IILCTTGLFITTAALLIIFIP) threads the bilayer. The Cytoplasmic segment spans residues 639 to 764 (KFWRVFRKGA…IIVNDSENNN (126 aa)). The disordered stretch occupies residues 664 to 764 (ATARAESGSK…IIVNDSENNN (101 aa)). Over residues 671–690 (GSKGSNGNASSGNRTNRRGN) the composition is skewed to low complexity. The span at 707–719 (ENQKEKEKIKDDV) shows a compositional bias: basic and acidic residues. The span at 731–748 (FTDEASDTDNNEFNDIEL) shows a compositional bias: acidic residues.

This sequence in the N-terminal section; belongs to the BMP lipoprotein family. It in the C-terminal section; belongs to the G-protein coupled receptor 3 family. GABA-B receptor subfamily.

The protein resides in the membrane. The polypeptide is Metabotropic glutamate receptor-like protein H (grlH) (Dictyostelium discoideum (Social amoeba)).